Here is a 157-residue protein sequence, read N- to C-terminus: ATP synthase subunit b (157 aa).

A helical membrane pass occupies residues 7–27 (LIAQLVVFFILAWFTMKFVWP).

It belongs to the ATPase B chain family. As to quaternary structure, F-type ATPases have 2 components, F(1) - the catalytic core - and F(0) - the membrane proton channel. F(1) has five subunits: alpha(3), beta(3), gamma(1), delta(1), epsilon(1). F(0) has three main subunits: a(1), b(2) and c(10-14). The alpha and beta chains form an alternating ring which encloses part of the gamma chain. F(1) is attached to F(0) by a central stalk formed by the gamma and epsilon chains, while a peripheral stalk is formed by the delta and b chains.

The protein resides in the cell inner membrane. Its function is as follows. F(1)F(0) ATP synthase produces ATP from ADP in the presence of a proton or sodium gradient. F-type ATPases consist of two structural domains, F(1) containing the extramembraneous catalytic core and F(0) containing the membrane proton channel, linked together by a central stalk and a peripheral stalk. During catalysis, ATP synthesis in the catalytic domain of F(1) is coupled via a rotary mechanism of the central stalk subunits to proton translocation. Functionally, component of the F(0) channel, it forms part of the peripheral stalk, linking F(1) to F(0). This Azoarcus sp. (strain BH72) protein is ATP synthase subunit b.